A 315-amino-acid chain; its full sequence is Ornithine carbamoyltransferase (315 aa).

Carbamoyl phosphate contacts are provided by residues 53–56 (STRT), Q80, R104, and 131–134 (HPCQ). Residues N163, D227, and 231 to 232 (SM) each bind L-ornithine. Carbamoyl phosphate-binding positions include 267-268 (CL) and R295.

It belongs to the aspartate/ornithine carbamoyltransferase superfamily. OTCase family.

Its subcellular location is the cytoplasm. The catalysed reaction is carbamoyl phosphate + L-ornithine = L-citrulline + phosphate + H(+). The protein operates within amino-acid biosynthesis; L-arginine biosynthesis; L-arginine from L-ornithine and carbamoyl phosphate: step 1/3. In terms of biological role, reversibly catalyzes the transfer of the carbamoyl group from carbamoyl phosphate (CP) to the N(epsilon) atom of ornithine (ORN) to produce L-citrulline. In Rhodococcus jostii (strain RHA1), this protein is Ornithine carbamoyltransferase.